An 869-amino-acid chain; its full sequence is Bifunctional uridylyltransferase/uridylyl-removing enzyme (869 aa).

Positions Met1–Gln332 are uridylyltransferase. The uridylyl-removing stretch occupies residues Leu333–Leu691. One can recognise an HD domain in the interval Val450–Leu572. 2 consecutive ACT domains span residues Glu692–Arg771 and Arg798–Thr869.

Belongs to the GlnD family. Mg(2+) is required as a cofactor.

The enzyme catalyses [protein-PII]-L-tyrosine + UTP = [protein-PII]-uridylyl-L-tyrosine + diphosphate. The catalysed reaction is [protein-PII]-uridylyl-L-tyrosine + H2O = [protein-PII]-L-tyrosine + UMP + H(+). Its activity is regulated as follows. Uridylyltransferase (UTase) activity is inhibited by glutamine, while glutamine activates uridylyl-removing (UR) activity. Its function is as follows. Modifies, by uridylylation and deuridylylation, the PII regulatory proteins (GlnB and homologs), in response to the nitrogen status of the cell that GlnD senses through the glutamine level. Under low glutamine levels, catalyzes the conversion of the PII proteins and UTP to PII-UMP and PPi, while under higher glutamine levels, GlnD hydrolyzes PII-UMP to PII and UMP (deuridylylation). Thus, controls uridylylation state and activity of the PII proteins, and plays an important role in the regulation of nitrogen assimilation and metabolism. The chain is Bifunctional uridylyltransferase/uridylyl-removing enzyme from Xanthomonas campestris pv. campestris (strain B100).